A 347-amino-acid polypeptide reads, in one-letter code: DNA-directed RNA polymerase subunit alpha (347 aa).

The alpha N-terminal domain (alpha-NTD) stretch occupies residues 1–226 (MLISQRPTLS…ELFGLARELN (226 aa)). Residues 241–347 (ADHIASFALP…DQDYAETEQL (107 aa)) are alpha C-terminal domain (alpha-CTD).

It belongs to the RNA polymerase alpha chain family. As to quaternary structure, homodimer. The RNAP catalytic core consists of 2 alpha, 1 beta, 1 beta' and 1 omega subunit. When a sigma factor is associated with the core the holoenzyme is formed, which can initiate transcription.

It catalyses the reaction RNA(n) + a ribonucleoside 5'-triphosphate = RNA(n+1) + diphosphate. Its function is as follows. DNA-dependent RNA polymerase catalyzes the transcription of DNA into RNA using the four ribonucleoside triphosphates as substrates. The sequence is that of DNA-directed RNA polymerase subunit alpha from Mycobacterium avium (strain 104).